A 261-amino-acid chain; its full sequence is Gap junction beta-6 protein (261 aa).

At 1–22 the chain is on the cytoplasmic side; the sequence is MDWGTLHTFIGGVNKHSTSIGK. The chain crosses the membrane as a helical span at residues 23–45; the sequence is VWITVIFIFRVMILVVAAQEVWG. Residues 46-75 lie on the Extracellular side of the membrane; sequence DEQEDFVCNTLQPGCKNVCYDHFFPVSHIR. The chain crosses the membrane as a helical span at residues 76–98; it reads LWALQLIFVSTPALLVAMHVAYY. The Cytoplasmic portion of the chain corresponds to 99–131; the sequence is RHETTRKFRRGEKRNDFKDIEDIKKQKVRIEGS. A helical transmembrane segment spans residues 132 to 154; that stretch reads LWWTYTSSIFFRIIFEAAFMYVF. Topologically, residues 155–192 are extracellular; it reads YFLYNGYHLPWVLKCGIDPCPNLVDCFISRPTEKTVFT. The helical transmembrane segment at 193-215 threads the bilayer; it reads IFMISASVICMLLNVAELCYLLL. At 216-261 the chain is on the cytoplasmic side; sequence KVCFRRSKRAQTQKNHPNHALKESKQNEMNELISDSGQNAITGFPS.

This sequence belongs to the connexin family. Beta-type (group I) subfamily. In terms of assembly, a connexon is composed of a hexamer of connexins. Interacts with CNST.

It is found in the cell membrane. Its subcellular location is the cell junction. The protein localises to the gap junction. Its function is as follows. One gap junction consists of a cluster of closely packed pairs of transmembrane channels, the connexons, through which materials of low MW diffuse from one cell to a neighboring cell. This Homo sapiens (Human) protein is Gap junction beta-6 protein (GJB6).